Consider the following 546-residue polypeptide: CTP synthase (546 aa).

The amidoligase domain stretch occupies residues 1–266 (MTTNYIFVTG…DDLVCQRFGI (266 aa)). Residue S14 coordinates CTP. UTP is bound at residue S14. Residues 15–20 (SLGKGI) and D72 contribute to the ATP site. Residues D72 and E140 each contribute to the Mg(2+) site. Residues 147–149 (DIE), 187–192 (KTKPTQ), and K223 each bind CTP. UTP contacts are provided by residues 187–192 (KTKPTQ) and K223. Residue 239-241 (KDV) participates in ATP binding. In terms of domain architecture, Glutamine amidotransferase type-1 spans 291–542 (TIGMVGKYIE…VKAAGENARG (252 aa)). Residue G352 participates in L-glutamine binding. The Nucleophile; for glutamine hydrolysis role is filled by C379. Residues 380 to 383 (LGMQ), E403, and R470 each bind L-glutamine. Catalysis depends on residues H515 and E517.

The protein belongs to the CTP synthase family. In terms of assembly, homotetramer.

The enzyme catalyses UTP + L-glutamine + ATP + H2O = CTP + L-glutamate + ADP + phosphate + 2 H(+). The catalysed reaction is L-glutamine + H2O = L-glutamate + NH4(+). It carries out the reaction UTP + NH4(+) + ATP = CTP + ADP + phosphate + 2 H(+). It participates in pyrimidine metabolism; CTP biosynthesis via de novo pathway; CTP from UDP: step 2/2. Allosterically activated by GTP, when glutamine is the substrate; GTP has no effect on the reaction when ammonia is the substrate. The allosteric effector GTP functions by stabilizing the protein conformation that binds the tetrahedral intermediate(s) formed during glutamine hydrolysis. Inhibited by the product CTP, via allosteric rather than competitive inhibition. Functionally, catalyzes the ATP-dependent amination of UTP to CTP with either L-glutamine or ammonia as the source of nitrogen. Regulates intracellular CTP levels through interactions with the four ribonucleotide triphosphates. This is CTP synthase from Aliivibrio salmonicida (strain LFI1238) (Vibrio salmonicida (strain LFI1238)).